The primary structure comprises 440 residues: Ran-specific GTPase-activating protein 30 (440 aa).

The RanBD1 domain maps to 1 to 314 (MDEILAKAGS…LVLKIDRSDD (314 aa)). Residue Thr272 is modified to Phosphothreonine. Residues 341–371 (IEEDEEEDEEEDEEEGKDGEERKEEEEEENK) show a composition bias toward acidic residues. Positions 341-375 (IEEDEEEDEEEDEEEGKDGEERKEEEEEENKLEDK) are disordered.

In terms of assembly, interacts with GSP1.

It is found in the cytoplasm. The protein localises to the nucleus. Important for the export of protein containing nuclear export signal (NES) out of the nucleus. Stimulates the GTPase activity of GSP1. This Saccharomyces cerevisiae (strain ATCC 204508 / S288c) (Baker's yeast) protein is Ran-specific GTPase-activating protein 30 (YRB30).